The primary structure comprises 276 residues: MGKLALAAKITHVPSMYLSELPGKNHGCRQGAIDGHKEISKRCREMGVDTIIVFDTHWLVNSAYHINCADHFEGVYTSNELPHFIRDMTYNYEGNPELGQLIADEALKLGVRAKAHNIPSLKLEYGSVVPMRYMNEDKRFKVVSISAFCTVHDFADSRKLGERIVKAIEQYDGTVAVLASGSLSHRFIDDQRAEEGMNSYTREFDRQMDERVVKLWREGQFKEFCNMLPEYADYCYGEGNMHDTVMLLGMLGWDKYDGKVWSLSPSYSQASWHRSG.

Fe cation serves as cofactor.

The catalysed reaction is 3,4-dihydroxyphenylacetate + O2 = 2-hydroxy-5-carboxymethylmuconate semialdehyde + H(+). The protein operates within aromatic compound metabolism; 4-hydroxyphenylacetate degradation; pyruvate and succinate semialdehyde from 4-hydroxyphenylacetate: step 2/7. Transforms homoprotocatechuic acid (HPC) into 5-carboxymethyl-2-hydroxy-muconic semialdehyde (CHMS). The chain is 3,4-dihydroxyphenylacetate 2,3-dioxygenase (hpcB) from Escherichia coli.